A 114-amino-acid polypeptide reads, in one-letter code: Iron-sulfur cluster insertion protein ErpA (114 aa).

3 residues coordinate iron-sulfur cluster: Cys42, Cys106, and Cys108.

It belongs to the HesB/IscA family. Homodimer. Iron-sulfur cluster is required as a cofactor.

In terms of biological role, required for insertion of 4Fe-4S clusters for at least IspG. The chain is Iron-sulfur cluster insertion protein ErpA from Yersinia pseudotuberculosis serotype O:1b (strain IP 31758).